Consider the following 409-residue polypeptide: tRNA(Met) cytidine acetate ligase (409 aa).

ATP is bound by residues 7 to 20 (VVEYNPMHNGHLYH), glycine 102, asparagine 169, and arginine 194.

Belongs to the TmcAL family.

It is found in the cytoplasm. The catalysed reaction is cytidine(34) in elongator tRNA(Met) + acetate + ATP = N(4)-acetylcytidine(34) in elongator tRNA(Met) + AMP + diphosphate. In terms of biological role, catalyzes the formation of N(4)-acetylcytidine (ac(4)C) at the wobble position of elongator tRNA(Met), using acetate and ATP as substrates. First activates an acetate ion to form acetyladenylate (Ac-AMP) and then transfers the acetyl group to tRNA to form ac(4)C34. This is tRNA(Met) cytidine acetate ligase from Clostridium botulinum (strain Okra / Type B1).